Reading from the N-terminus, the 426-residue chain is Histidine--tRNA ligase (426 aa).

This sequence belongs to the class-II aminoacyl-tRNA synthetase family. Homodimer.

Its subcellular location is the cytoplasm. It carries out the reaction tRNA(His) + L-histidine + ATP = L-histidyl-tRNA(His) + AMP + diphosphate + H(+). The protein is Histidine--tRNA ligase of Streptococcus thermophilus (strain ATCC BAA-491 / LMD-9).